Reading from the N-terminus, the 281-residue chain is Elongation factor 1-delta (281 aa).

Ala2 is modified (N-acetylalanine). At Lys17 the chain carries N6-acetyllysine. A phosphoserine mark is found at Ser37, Ser44, Ser60, Ser86, and Ser106. The interval Leu80–Leu115 is leucine-zipper. Residue Lys107 is modified to N6-acetyllysine. Positions Leu115–Val132 are enriched in polar residues. The tract at residues Leu115 to Ala172 is disordered. Position 117 is an N6-acetyllysine; alternate (Lys117). The residue at position 117 (Lys117) is an N6-succinyllysine; alternate. Ser119 is subject to Phosphoserine. Position 129 is a phosphothreonine (Thr129). Ser133 carries the phosphoserine modification. Thr147 carries the phosphothreonine modification. Positions Ala149–Lys169 are enriched in acidic residues. Ser162 carries the post-translational modification Phosphoserine; by CK2. A catalytic (GEF) region spans residues Arg173–Ile281.

The protein belongs to the EF-1-beta/EF-1-delta family. As to quaternary structure, EF-1 is composed of 4 subunits: alpha, beta, delta isoform 1, and gamma. Isoform 2 interacts with HSF1 and NFE2L2.

Its subcellular location is the nucleus. In terms of biological role, EF-1-beta and EF-1-delta stimulate the exchange of GDP bound to EF-1-alpha to GTP, regenerating EF-1-alpha for another round of transfer of aminoacyl-tRNAs to the ribosome. Functionally, regulates induction of heat-shock-responsive genes through association with heat shock transcription factors and direct DNA-binding at heat shock promoter elements (HSE). The chain is Elongation factor 1-delta (Eef1d) from Rattus norvegicus (Rat).